We begin with the raw amino-acid sequence, 86 residues long: Small ribosomal subunit protein bS16 (86 aa).

The protein belongs to the bacterial ribosomal protein bS16 family.

The protein is Small ribosomal subunit protein bS16 of Borreliella afzelii (strain PKo) (Borrelia afzelii).